We begin with the raw amino-acid sequence, 236 residues long: Uridylate kinase (236 aa).

12-15 (KLSG) contributes to the ATP binding site. An involved in allosteric activation by GTP region spans residues 20–25 (GEKGFG). Glycine 54 provides a ligand contact to UMP. The ATP site is built by glycine 55 and arginine 59. UMP contacts are provided by residues aspartate 72 and 133–140 (TGNPYFST). ATP contacts are provided by asparagine 161, tyrosine 166, and aspartate 169.

Belongs to the UMP kinase family. As to quaternary structure, homohexamer.

The protein localises to the cytoplasm. The enzyme catalyses UMP + ATP = UDP + ADP. It functions in the pathway pyrimidine metabolism; CTP biosynthesis via de novo pathway; UDP from UMP (UMPK route): step 1/1. With respect to regulation, allosterically activated by GTP. Inhibited by UTP. Functionally, catalyzes the reversible phosphorylation of UMP to UDP. This is Uridylate kinase from Alkaliphilus metalliredigens (strain QYMF).